A 499-amino-acid chain; its full sequence is Apolipoprotein N-acyltransferase (499 aa).

The next 6 membrane-spanning stretches (helical) occupy residues 17–37 (VLAG…ALAL), 38–58 (LWSA…AVLL), 84–104 (ASIW…WAWL), 131–151 (IWGL…GVGG), 163–183 (LARW…GWWL), and 198–218 (RSLL…WSLL). A CN hydrolase domain is found at 232–458 (WQPAIPTRSK…EGVGLADLHF (227 aa)). Glu273 functions as the Proton acceptor in the catalytic mechanism. Lys322 is a catalytic residue. The active-site Nucleophile is Cys370. Residues 474 to 494 (IGLMLFAVVGLGLSRVRSWLI) traverse the membrane as a helical segment.

The protein belongs to the CN hydrolase family. Apolipoprotein N-acyltransferase subfamily.

The protein resides in the cell inner membrane. The enzyme catalyses N-terminal S-1,2-diacyl-sn-glyceryl-L-cysteinyl-[lipoprotein] + a glycerophospholipid = N-acyl-S-1,2-diacyl-sn-glyceryl-L-cysteinyl-[lipoprotein] + a 2-acyl-sn-glycero-3-phospholipid + H(+). The protein operates within protein modification; lipoprotein biosynthesis (N-acyl transfer). Its function is as follows. Catalyzes the phospholipid dependent N-acylation of the N-terminal cysteine of apolipoprotein, the last step in lipoprotein maturation. The sequence is that of Apolipoprotein N-acyltransferase from Prochlorococcus marinus (strain MIT 9313).